The following is a 407-amino-acid chain: Cysteine desulfurase (407 aa).

Position 226 is an N6-(pyridoxal phosphate)lysine (Lys226). The Cysteine persulfide intermediate role is filled by Cys364.

The protein belongs to the class-V pyridoxal-phosphate-dependent aminotransferase family. Csd subfamily. Homodimer. Interacts with SufE and the SufBCD complex composed of SufB, SufC and SufD. The interaction with SufE is required to mediate the direct transfer of the sulfur atom from the S-sulfanylcysteine. Pyridoxal 5'-phosphate serves as cofactor.

The protein localises to the cytoplasm. The enzyme catalyses (sulfur carrier)-H + L-cysteine = (sulfur carrier)-SH + L-alanine. The catalysed reaction is L-selenocysteine + AH2 = hydrogenselenide + L-alanine + A + H(+). It participates in cofactor biosynthesis; iron-sulfur cluster biosynthesis. Cysteine desulfurases mobilize the sulfur from L-cysteine to yield L-alanine, an essential step in sulfur metabolism for biosynthesis of a variety of sulfur-containing biomolecules. Component of the suf operon, which is activated and required under specific conditions such as oxidative stress and iron limitation. Acts as a potent selenocysteine lyase in vitro, that mobilizes selenium from L-selenocysteine. Selenocysteine lyase activity is however unsure in vivo. The polypeptide is Cysteine desulfurase (Pectobacterium carotovorum subsp. carotovorum (strain PC1)).